A 155-amino-acid polypeptide reads, in one-letter code: SsrA-binding protein (155 aa).

Positions 135 to 147 are enriched in basic and acidic residues; the sequence is TIKRRDQERDIKK. The disordered stretch occupies residues 135–155; the sequence is TIKRRDQERDIKKQMKHYNAR.

It belongs to the SmpB family.

It is found in the cytoplasm. Its function is as follows. Required for rescue of stalled ribosomes mediated by trans-translation. Binds to transfer-messenger RNA (tmRNA), required for stable association of tmRNA with ribosomes. tmRNA and SmpB together mimic tRNA shape, replacing the anticodon stem-loop with SmpB. tmRNA is encoded by the ssrA gene; the 2 termini fold to resemble tRNA(Ala) and it encodes a 'tag peptide', a short internal open reading frame. During trans-translation Ala-aminoacylated tmRNA acts like a tRNA, entering the A-site of stalled ribosomes, displacing the stalled mRNA. The ribosome then switches to translate the ORF on the tmRNA; the nascent peptide is terminated with the 'tag peptide' encoded by the tmRNA and targeted for degradation. The ribosome is freed to recommence translation, which seems to be the essential function of trans-translation. The polypeptide is SsrA-binding protein (Streptococcus pyogenes serotype M6 (strain ATCC BAA-946 / MGAS10394)).